The primary structure comprises 401 residues: Phosphoglycerate kinase (401 aa).

Substrate contacts are provided by residues 24–26, Arg-40, 63–66, Arg-122, and Arg-155; these read DFN and HFGR. ATP-binding positions include Lys-206, Gly-297, Glu-328, and 357–360; that span reads GGDS.

This sequence belongs to the phosphoglycerate kinase family. As to quaternary structure, monomer.

The protein resides in the cytoplasm. It carries out the reaction (2R)-3-phosphoglycerate + ATP = (2R)-3-phospho-glyceroyl phosphate + ADP. It functions in the pathway carbohydrate degradation; glycolysis; pyruvate from D-glyceraldehyde 3-phosphate: step 2/5. The chain is Phosphoglycerate kinase from Acaryochloris marina (strain MBIC 11017).